Here is a 354-residue protein sequence, read N- to C-terminus: Putative cinnamyl alcohol dehydrogenase 4 (354 aa).

Residues Cys47, His69, Glu70, Cys100, Cys103, Cys106, Cys114, and Cys163 each coordinate Zn(2+). Residues Thr167, 188–193, 211–216, Thr251, and 297–299 contribute to the NADP(+) site; these read GLGGLG, STSESK, and SVT.

This sequence belongs to the zinc-containing alcohol dehydrogenase family. In terms of assembly, homodimer. The cofactor is Zn(2+).

The catalysed reaction is (E)-cinnamyl alcohol + NADP(+) = (E)-cinnamaldehyde + NADPH + H(+). It catalyses the reaction (E)-coniferol + NADP(+) = (E)-coniferaldehyde + NADPH + H(+). The enzyme catalyses (E)-sinapyl alcohol + NADP(+) = (E)-sinapaldehyde + NADPH + H(+). It carries out the reaction (E)-4-coumaroyl alcohol + NADP(+) = (E)-4-coumaraldehyde + NADPH + H(+). The catalysed reaction is (E)-caffeyl alcohol + NADP(+) = (E)-caffeyl aldehyde + NADPH + H(+). It functions in the pathway aromatic compound metabolism; phenylpropanoid biosynthesis. Involved in lignin biosynthesis. Catalyzes the final step specific for the production of lignin monomers. Catalyzes the NADPH-dependent reduction of coniferaldehyde, 5-hydroxyconiferaldehyde, sinapaldehyde, 4-coumaraldehyde and caffeyl aldehyde to their respective alcohols. This chain is Putative cinnamyl alcohol dehydrogenase 4, found in Oryza sativa subsp. japonica (Rice).